The sequence spans 161 residues: V-type proton ATPase subunit c (161 aa).

At 1 to 9 (MSTDLCPVY) the chain is on the lumenal side. A helical transmembrane segment spans residues 10 to 32 (APFFGVMGCTAAIVFASFGAAYG). The Cytoplasmic segment spans residues 33–54 (TAKAGVGISAMGVLRPDLIVKN). Residues 55–75 (TIPVVMAGIIAIYGLVVSVLI) form a helical membrane-spanning segment. At 76–91 (SGNLKQILSLYSGFIQ) the chain is on the lumenal side. A helical membrane pass occupies residues 92-113 (LGAGLSVGLAGLAAGFAIGIVG). The Cytoplasmic segment spans residues 114–125 (DAGVRGTAQQPR). Residues 126-151 (LFVAMILILIFAEVLGLYGLIVALLL) form a helical membrane-spanning segment. At 152 to 161 (NTRATDNVTC) the chain is on the lumenal side.

This sequence belongs to the V-ATPase proteolipid subunit family. In terms of assembly, V-ATPase is a heteromultimeric enzyme composed of a peripheral catalytic V1 complex (components A to H) attached to an integral membrane V0 proton pore complex (components: a, c, c', c'', d, e, f and VOA1). The decameric c-ring forms the proton-conducting pore, and is composed of eight proteolipid subunits c, one subunit c' and one subunit c''.

Its subcellular location is the vacuole membrane. Functionally, proton-conducting pore forming subunit of the V0 complex of vacuolar(H+)-ATPase (V-ATPase), a multisubunit enzyme composed of a peripheral complex (V1) that hydrolyzes ATP and a membrane integral complex (V0) that translocates protons. V-ATPase is responsible for acidifying and maintaining the pH of intracellular compartments. The protein is V-type proton ATPase subunit c of Schizosaccharomyces pombe (strain 972 / ATCC 24843) (Fission yeast).